The sequence spans 472 residues: Trigger factor (472 aa).

The region spanning 174 to 261 (GDIALVSFKG…LEDLKIKELP (88 aa)) is the PPIase FKBP-type domain. Residues 438–472 (EKTPEKARDQIKEKSSKKKTTKTNKEKKSSKTPKS) are disordered. The segment covering 439–451 (KTPEKARDQIKEK) has biased composition (basic and acidic residues).

It belongs to the FKBP-type PPIase family. Tig subfamily.

The protein localises to the cytoplasm. The enzyme catalyses [protein]-peptidylproline (omega=180) = [protein]-peptidylproline (omega=0). In terms of biological role, involved in protein export. Acts as a chaperone by maintaining the newly synthesized protein in an open conformation. Functions as a peptidyl-prolyl cis-trans isomerase. The chain is Trigger factor from Prochlorococcus marinus (strain NATL2A).